Reading from the N-terminus, the 309-residue chain is NAD kinase (309 aa).

Catalysis depends on D89, which acts as the Proton acceptor. Residues 89–90, 163–164, H174, R191, D193, and 204–209 each bind NAD(+); these read DG, NE, and TAYALS.

It belongs to the NAD kinase family. The cofactor is a divalent metal cation.

The protein resides in the cytoplasm. It catalyses the reaction NAD(+) + ATP = ADP + NADP(+) + H(+). Its function is as follows. Involved in the regulation of the intracellular balance of NAD and NADP, and is a key enzyme in the biosynthesis of NADP. Catalyzes specifically the phosphorylation on 2'-hydroxyl of the adenosine moiety of NAD to yield NADP. In Shewanella baltica (strain OS155 / ATCC BAA-1091), this protein is NAD kinase.